The following is a 2590-amino-acid chain: 5-methylorsellinic acid synthase (2590 aa).

The tract at residues L6–A255 is N-terminal acylcarrier protein transacylase domain (SAT). Residues G369 to Q784 enclose the Ketosynthase family 3 (KS3) domain. Catalysis depends on for beta-ketoacyl synthase activity residues C534, H669, and H707. Positions L891–P1191 are malonyl-CoA:ACP transacylase (MAT) domain. S978 serves as the catalytic For acyl/malonyl transferase activity. Positions P1263–S1393 are N-terminal hotdog fold. A PKS/mFAS DH domain is found at P1263–K1569. The interval S1267–L1568 is product template (PT) domain. H1297 serves as the catalytic Proton acceptor; for dehydratase activity. The tract at residues T1421–K1569 is C-terminal hotdog fold. Residue D1481 is the Proton donor; for dehydratase activity of the active site. The interval L1587 to A1612 is disordered. Carrier domains lie at A1617 to T1691 and S1736 to P1812. O-(pantetheine 4'-phosphoryl)serine occurs at positions 1651 and 1772. A methyltransferase (CMeT) domain region spans residues Q1980–D2212. A thioesterase (TE) domain region spans residues L2282–L2590.

It catalyses the reaction 3 malonyl-CoA + acetyl-CoA + S-adenosyl-L-methionine + H(+) = 5-methylorsellinate + S-adenosyl-L-homocysteine + 3 CO2 + 4 CoA. Its pathway is secondary metabolite biosynthesis. Non-reducing polyketide synthase; part of the cluster A that mediates the biosynthesis of azasperpyranones, members of the azaphilone family that exhibit anti-cancer activities. Azasperpyranones are synthesized by 2 clusters, A and B. Cluster A is responsible for the production of the polyhydric phenol moiety while the azaphilonoid scaffold is produced by the cluster B. The non-reducing polyketide synthase ATEG_03629 produces 5-methyl orsellinic acid, which is then reduced to 5-methyl orsellinic aldehyde by the NRPS-like protein ATEG_03630. 5-methyl orsellinic aldehyde is then first hydroxylated by the FAD-dependent monooxygenase ATEG_03635 and subsequently hydroxylated by the cytochrome P450 monooxygenase ATEG_03631 to produce the unstable polyhydric phenol precursor of azasperpyranones. On the other hand, the polyketide synthase ATEG_07659 is responsible for producing the 3,5-dimethyloctadienone moiety from acetyl-CoA, three malonyl-CoA, and two S-adenosyl methionines (SAM). The 3,5-dimethyloctadienone moiety is then loaded onto the SAT domain of ATEG_07661 and extended with four malonyl-CoA and one SAM, which leads to the formation of 2,4-dihydroxy-6-(5,7-dimethyl-2-oxo-trans-3-trans-5-nonadienyl)-3-methylbenzaldehyde (compound 8) after reductive release and aldol condensation. The FAD-dependent monooxygenase ATEG_07662 is the next enzyme in the biosynthesis sequence and hydroxylates the side chain at the benzylic position of compound 8. In Aspergillus nidulans, afoF, the ortholog of the FAD-dependent oxygenase ATEG_07660, is the key enzyme for the biosynthesis of asperfuranone by catalyzing the hydroxylation at C-8 of to prevent the formation of a six-membered ring hemiacetal intermediate and thus facilitating the formation of a five-membered ring to produce asperfuranone. In Aspergillus terreus, ATEG_07660 is probably not functional, which leads to the formation of the six-membered ring hemiacetal intermediate presperpyranone instead of asperfuranone. Finally, ATEG_03636 is involved in the condensation of the polyhydric phenol moiety produced by cluster A and the perasperpyranone precursor produced by cluster B, to yield azasperpyranone A. Further modifications of azasperpyranone A result in the production of derivatives, including azasperpyranone B to F. This Aspergillus terreus (strain NIH 2624 / FGSC A1156) protein is 5-methylorsellinic acid synthase.